Here is a 197-residue protein sequence, read N- to C-terminus: Phospholipid hydroperoxide glutathione peroxidase (197 aa).

Phosphoserine is present on Ser-40. Sec-73 is an active-site residue. Sec-73 is a non-standard amino acid (selenocysteine). At Val-78 the chain carries Phosphoserine.

The protein belongs to the glutathione peroxidase family. In terms of assembly, monomer. Has a tendency to form higher mass oligomers. Interacts with FUNDC1; this interaction promotes GPX4 recruitment into mitochondria through TOM/TIM complex where it is degraded by mitophagy. In terms of tissue distribution, present primarily in testis. Expressed in flagella of epididymal sperm. Isoform Cytoplasmic: Highly expressed in testis. Present in spermatogonia, spermatocyte and spermatid (at protein level).

The protein resides in the nucleus. Its subcellular location is the nucleolus. It is found in the mitochondrion. The protein localises to the cytoplasm. The enzyme catalyses a hydroperoxy polyunsaturated fatty acid + 2 glutathione = a hydroxy polyunsaturated fatty acid + glutathione disulfide + H2O. It carries out the reaction 2 glutathione + H2O2 = glutathione disulfide + 2 H2O. The catalysed reaction is tert-butyl hydroperoxide + 2 glutathione = tert-butanol + glutathione disulfide + H2O. It catalyses the reaction cumene hydroperoxide + 2 glutathione = 2-phenylpropan-2-ol + glutathione disulfide + H2O. The enzyme catalyses (9S)-hydroperoxy-(10E,12Z)-octadecadienoate + 2 glutathione = (9S)-hydroxy-(10E,12Z)-octadecadienoate + glutathione disulfide + H2O. It carries out the reaction (13S)-hydroperoxy-(9Z,11E)-octadecadienoate + 2 glutathione = (13S)-hydroxy-(9Z,11E)-octadecadienoate + glutathione disulfide + H2O. The catalysed reaction is (5S)-hydroperoxy-(6E,8Z,11Z,14Z)-eicosatetraenoate + 2 glutathione = (5S)-hydroxy-(6E,8Z,11Z,14Z)-eicosatetraenoate + glutathione disulfide + H2O. It catalyses the reaction (12R)-hydroperoxy-(5Z,8Z,10E,14Z)-eicosatetraenoate + 2 glutathione = (12R)-hydroxy-(5Z,8Z,10E,14Z)-eicosatetraenoate + glutathione disulfide + H2O. The enzyme catalyses (12S)-hydroperoxy-(5Z,8Z,10E,14Z)-eicosatetraenoate + 2 glutathione = (12S)-hydroxy-(5Z,8Z,10E,14Z)-eicosatetraenoate + glutathione disulfide + H2O. It carries out the reaction (15S)-hydroperoxy-(5Z,8Z,11Z,13E)-eicosatetraenoate + 2 glutathione = (15S)-hydroxy-(5Z,8Z,11Z,13E)-eicosatetraenoate + glutathione disulfide + H2O. The catalysed reaction is (5S)-hydroperoxy-(6E,8Z,11Z,14Z,17Z)-eicosapentaenoate + 2 glutathione = (5S)-hydroxy-(6E,8Z,11Z,14Z,17Z)-eicosapentaenoate + glutathione disulfide + H2O. It catalyses the reaction (12S)-hydroperoxy-(5Z,8Z,10E,14Z,17Z)-eicosapentaenoate + 2 glutathione = (12S)-hydroxy-(5Z,8Z,10E,14Z,17Z)-eicosapentaenoate + glutathione disulfide + H2O. The enzyme catalyses (15S)-hydroperoxy-(5Z,8Z,11Z,13E,17Z)-eicosapentaenoate + 2 glutathione = (15S)-hydroxy-(5Z,8Z,11Z,13E,17Z)-eicosapentaenoate + glutathione disulfide + H2O. It carries out the reaction (15S)-hydroperoxy-(11Z,13E)-eicosadienoate + 2 glutathione = (15S)-hydroxy-(11Z,13E)-eicosadienoate + glutathione disulfide + H2O. The catalysed reaction is (17S)-hydroperoxy-(4Z,7Z,10Z,13Z,15E,19Z)-docosahexaenoate + 2 glutathione = (17S)-hydroxy-(4Z,7Z,10Z,13Z,15E,19Z)-docosahexaenoate + glutathione disulfide + H2O. It catalyses the reaction a hydroperoxy-1,2-diacyl-glycero-3-phosphocholine + 2 glutathione = a hydroxy-1,2-diacyl-glycero-3-phosphocholine + glutathione disulfide + H2O. In terms of biological role, essential antioxidant peroxidase that directly reduces phospholipid hydroperoxide even if they are incorporated in membranes and lipoproteins. Can also reduce fatty acid hydroperoxide, cholesterol hydroperoxide and thymine hydroperoxide. Plays a key role in protecting cells from oxidative damage by preventing membrane lipid peroxidation. Required to prevent cells from ferroptosis, a non-apoptotic cell death resulting from an iron-dependent accumulation of lipid reactive oxygen species. The presence of selenocysteine (Sec) versus Cys at the active site is essential for life: it provides resistance to overoxidation and prevents cells against ferroptosis. The presence of Sec at the active site is also essential for the survival of a specific type of parvalbumin-positive interneurons, thereby preventing against fatal epileptic seizures. May be required to protect cells from the toxicity of ingested lipid hydroperoxides. Required for normal sperm development and male fertility. Essential for maturation and survival of photoreceptor cells. Plays a role in a primary T-cell response to viral and parasitic infection by protecting T-cells from ferroptosis and by supporting T-cell expansion. Plays a role of glutathione peroxidase in platelets in the arachidonic acid metabolism. Reduces hydroperoxy ester lipids formed by a 15-lipoxygenase that may play a role as down-regulator of the cellular 15-lipoxygenase pathway. Can also reduce small soluble hydroperoxides such as H2O2, cumene hydroperoxide and tert-butyl hydroperoxide. Functionally, specifically able to suppress the production of leukotriene and prostaglandin in response to several stimuli by reducing fatty acid hydroperoxide. Specifically required to prevent mitochondrial cell death by mediating reduction of cardiolipin hydroperoxide. Also required for normal sperm development and male fertility. Its function is as follows. Required for male fertility by stabilizing the condensed chromatin in sperm nuclei. The sequence is that of Phospholipid hydroperoxide glutathione peroxidase from Rattus norvegicus (Rat).